The primary structure comprises 201 residues: Protein GrpE (201 aa).

Polar residues predominate over residues 1-11 (MTDSTNNQGTS). Residues 1 to 40 (MTDSTNNQGTSGRPDDDHTTEEVASVFNDPGAQAPAGEPD) form a disordered region.

The protein belongs to the GrpE family. In terms of assembly, homodimer.

Its subcellular location is the cytoplasm. Functionally, participates actively in the response to hyperosmotic and heat shock by preventing the aggregation of stress-denatured proteins, in association with DnaK and GrpE. It is the nucleotide exchange factor for DnaK and may function as a thermosensor. Unfolded proteins bind initially to DnaJ; upon interaction with the DnaJ-bound protein, DnaK hydrolyzes its bound ATP, resulting in the formation of a stable complex. GrpE releases ADP from DnaK; ATP binding to DnaK triggers the release of the substrate protein, thus completing the reaction cycle. Several rounds of ATP-dependent interactions between DnaJ, DnaK and GrpE are required for fully efficient folding. The polypeptide is Protein GrpE (Beijerinckia indica subsp. indica (strain ATCC 9039 / DSM 1715 / NCIMB 8712)).